The following is a 173-amino-acid chain: Shikimate kinase (173 aa).

Glycine 11–serine 16 serves as a coordination point for ATP. Residue threonine 15 participates in Mg(2+) binding. 3 residues coordinate substrate: aspartate 33, arginine 57, and glycine 79. Residue arginine 117 coordinates ATP. Arginine 136 is a substrate binding site.

It belongs to the shikimate kinase family. Monomer. Mg(2+) is required as a cofactor.

Its subcellular location is the cytoplasm. It catalyses the reaction shikimate + ATP = 3-phosphoshikimate + ADP + H(+). The protein operates within metabolic intermediate biosynthesis; chorismate biosynthesis; chorismate from D-erythrose 4-phosphate and phosphoenolpyruvate: step 5/7. Catalyzes the specific phosphorylation of the 3-hydroxyl group of shikimic acid using ATP as a cosubstrate. The sequence is that of Shikimate kinase from Thermodesulfovibrio yellowstonii (strain ATCC 51303 / DSM 11347 / YP87).